A 198-amino-acid polypeptide reads, in one-letter code: Probable thymidylate kinase (198 aa).

7-14 contacts ATP; sequence GIDGAGKS.

It belongs to the thymidylate kinase family.

The catalysed reaction is dTMP + ATP = dTDP + ADP. The polypeptide is Probable thymidylate kinase (Methanocorpusculum labreanum (strain ATCC 43576 / DSM 4855 / Z)).